The following is a 928-amino-acid chain: Protein Niban 1 (928 aa).

Gly2 is lipidated: N-myristoyl glycine. Residues Ser579, Ser582, Ser596, Ser602, and Ser646 each carry the phosphoserine modification. A compositionally biased stretch (polar residues) spans 580–596 (VSSLTDLKPPTGSNQAS). The tract at residues 580-600 (VSSLTDLKPPTGSNQASPARR) is disordered. Disordered regions lie at residues 618 to 654 (VFQE…GTEQ) and 669 to 707 (ATED…TASG). Over residues 690 to 701 (LEDEEPAQEEPE) the composition is skewed to acidic residues. A Phosphoserine modification is found at Ser708. Disordered regions lie at residues 723–877 (PVDS…ATAS) and 899–928 (PNPD…PSEE). A compositionally biased stretch (low complexity) spans 801–818 (GGLTEEPLGPMEGELPGE). The span at 825-834 (HEGRGGKCTE) shows a compositional bias: basic and acidic residues. A compositionally biased stretch (low complexity) spans 865–877 (MGGQSSAAQATAS). A compositionally biased stretch (basic and acidic residues) spans 905–915 (LSHKDDVKEGE). Ser926 carries the phosphoserine modification.

The protein belongs to the Niban family. In terms of tissue distribution, expressed in various types of thyroid tumor such as papillary thyroid carcinomas and oxyphilic thyroid tumors but not in normal thyroid tissue (at protein level). Strongly expressed in heart, skeletal muscle, pancreas, white blood cells and prostate with moderate expression in colon and spleen. Expressed in renal carcinoma cells but not in normal kidney.

It is found in the cytoplasm. It localises to the membrane. Regulates phosphorylation of a number of proteins involved in translation regulation including EIF2A, EIF4EBP1 and RPS6KB1. May be involved in the endoplasmic reticulum stress response. In Homo sapiens (Human), this protein is Protein Niban 1.